An 88-amino-acid polypeptide reads, in one-letter code: MITKEQKQQIIATFGSKPNDTGSAEVQIALLDSRIKDLTEHFKANKKDFHSRRGLIAMVNQRKSLLEYLKRSNLESYKKLIEKLGLRK.

Belongs to the universal ribosomal protein uS15 family. As to quaternary structure, part of the 30S ribosomal subunit. Forms a bridge to the 50S subunit in the 70S ribosome, contacting the 23S rRNA.

One of the primary rRNA binding proteins, it binds directly to 16S rRNA where it helps nucleate assembly of the platform of the 30S subunit by binding and bridging several RNA helices of the 16S rRNA. Functionally, forms an intersubunit bridge (bridge B4) with the 23S rRNA of the 50S subunit in the ribosome. The protein is Small ribosomal subunit protein uS15 of Leptospira biflexa serovar Patoc (strain Patoc 1 / Ames).